The sequence spans 87 residues: Small ribosomal subunit protein bS20 (87 aa).

A disordered region spans residues 1–24 (MANTAQARKRARQSVERNKHNSSL).

This sequence belongs to the bacterial ribosomal protein bS20 family.

In terms of biological role, binds directly to 16S ribosomal RNA. The chain is Small ribosomal subunit protein bS20 from Bordetella avium (strain 197N).